The primary structure comprises 283 residues: Ribosomal RNA small subunit methyltransferase H (283 aa).

S-adenosyl-L-methionine is bound by residues 31–33 (GGH), aspartate 50, phenylalanine 77, aspartate 93, and glutamine 100.

The protein belongs to the methyltransferase superfamily. RsmH family.

The protein resides in the cytoplasm. It carries out the reaction cytidine(1402) in 16S rRNA + S-adenosyl-L-methionine = N(4)-methylcytidine(1402) in 16S rRNA + S-adenosyl-L-homocysteine + H(+). Its function is as follows. Specifically methylates the N4 position of cytidine in position 1402 (C1402) of 16S rRNA. This Trichodesmium erythraeum (strain IMS101) protein is Ribosomal RNA small subunit methyltransferase H.